Consider the following 311-residue polypeptide: Geranylgeranyl transferase type-2 subunit beta (311 aa).

PFTB repeat units follow at residues K54–D95, K102–G143, K150–N191, D197–G239, and R246–Q288. Geranylgeranyl diphosphate is bound by residues H176 to A178 and R218 to W230. D224, C226, and H276 together coordinate Zn(2+).

It belongs to the protein prenyltransferase subunit beta family. In terms of assembly, heterodimer of an alpha and a beta subunit. Requires Zn(2+) as cofactor.

The enzyme catalyses geranylgeranyl diphosphate + L-cysteinyl-[protein] = S-geranylgeranyl-L-cysteinyl-[protein] + diphosphate. Functionally, catalyzes the transfer of a geranyl-geranyl moiety from geranyl-geranyl pyrophosphate to proteins having the C-terminal -XCC or -XCXC, where both cysteines may become modified. This is Geranylgeranyl transferase type-2 subunit beta (ptb1) from Schizosaccharomyces pombe (strain 972 / ATCC 24843) (Fission yeast).